The sequence spans 105 residues: Small ribosomal subunit protein uS10 (105 aa).

This sequence belongs to the universal ribosomal protein uS10 family. In terms of assembly, part of the 30S ribosomal subunit.

Functionally, involved in the binding of tRNA to the ribosomes. In Rickettsia canadensis (strain McKiel), this protein is Small ribosomal subunit protein uS10.